Reading from the N-terminus, the 414-residue chain is Argininosuccinate synthase (414 aa).

ATP is bound by residues 15 to 23 (AYSGGLDTS) and alanine 42. L-citrulline-binding residues include tyrosine 93 and serine 98. Glycine 123 contacts ATP. Threonine 125, asparagine 129, and aspartate 130 together coordinate L-aspartate. L-citrulline is bound at residue asparagine 129. L-citrulline is bound by residues arginine 133, serine 182, serine 191, glutamate 267, and tyrosine 279.

This sequence belongs to the argininosuccinate synthase family. Type 1 subfamily. In terms of assembly, homotetramer.

It localises to the cytoplasm. The enzyme catalyses L-citrulline + L-aspartate + ATP = 2-(N(omega)-L-arginino)succinate + AMP + diphosphate + H(+). It participates in amino-acid biosynthesis; L-arginine biosynthesis; L-arginine from L-ornithine and carbamoyl phosphate: step 2/3. The polypeptide is Argininosuccinate synthase (Deinococcus geothermalis (strain DSM 11300 / CIP 105573 / AG-3a)).